The primary structure comprises 538 residues: Bifunctional purine biosynthesis protein PurH (538 aa).

An MGS-like domain is found at 8 to 158; it reads IPAPDKVEIK…KNHAYVTILT (151 aa).

Belongs to the PurH family.

It catalyses the reaction (6R)-10-formyltetrahydrofolate + 5-amino-1-(5-phospho-beta-D-ribosyl)imidazole-4-carboxamide = 5-formamido-1-(5-phospho-D-ribosyl)imidazole-4-carboxamide + (6S)-5,6,7,8-tetrahydrofolate. The catalysed reaction is IMP + H2O = 5-formamido-1-(5-phospho-D-ribosyl)imidazole-4-carboxamide. Its pathway is purine metabolism; IMP biosynthesis via de novo pathway; 5-formamido-1-(5-phospho-D-ribosyl)imidazole-4-carboxamide from 5-amino-1-(5-phospho-D-ribosyl)imidazole-4-carboxamide (10-formyl THF route): step 1/1. It participates in purine metabolism; IMP biosynthesis via de novo pathway; IMP from 5-formamido-1-(5-phospho-D-ribosyl)imidazole-4-carboxamide: step 1/1. This is Bifunctional purine biosynthesis protein PurH from Rhizobium etli (strain ATCC 51251 / DSM 11541 / JCM 21823 / NBRC 15573 / CFN 42).